The primary structure comprises 276 residues: Palmitoyltransferase ZDHHC22 (276 aa).

The Cytoplasmic segment spans residues Met-1 to Thr-9. Residues Ile-10–Phe-30 form a helical membrane-spanning segment. Over Thr-31 to Ala-45 the chain is Lumenal. A helical transmembrane segment spans residues Met-46–Met-66. The Cytoplasmic segment spans residues Thr-67–Tyr-131. The region spanning His-101–Ile-137 is the DHHC domain. Cys-117 (S-palmitoyl cysteine intermediate) is an active-site residue. Residues Phe-132–Ala-152 traverse the membrane as a helical segment. Residues Tyr-153–Pro-165 lie on the Lumenal side of the membrane. Residues Leu-166–Gly-186 form a helical membrane-spanning segment. Residues Leu-187–Gln-188 lie on the Cytoplasmic side of the membrane. A helical membrane pass occupies residues Phe-189–Cys-209. At Cys-210–Asp-276 the chain is on the lumenal side.

The protein belongs to the DHHC palmitoyltransferase family.

The protein resides in the endoplasmic reticulum membrane. Its subcellular location is the golgi apparatus membrane. The enzyme catalyses L-cysteinyl-[protein] + hexadecanoyl-CoA = S-hexadecanoyl-L-cysteinyl-[protein] + CoA. Its function is as follows. Palmitoyltransferase that could catalyze the addition of palmitate onto various protein substrates and be involved in a variety of cellular processes. The polypeptide is Palmitoyltransferase ZDHHC22 (zdhhc22) (Danio rerio (Zebrafish)).